We begin with the raw amino-acid sequence, 238 residues long: Large ribosomal subunit protein uL1 (238 aa).

It belongs to the universal ribosomal protein uL1 family. In terms of assembly, part of the 50S ribosomal subunit.

Functionally, binds directly to 23S rRNA. The L1 stalk is quite mobile in the ribosome, and is involved in E site tRNA release. Its function is as follows. Protein L1 is also a translational repressor protein, it controls the translation of the L11 operon by binding to its mRNA. The polypeptide is Large ribosomal subunit protein uL1 (Saccharopolyspora erythraea (strain ATCC 11635 / DSM 40517 / JCM 4748 / NBRC 13426 / NCIMB 8594 / NRRL 2338)).